A 294-amino-acid polypeptide reads, in one-letter code: Acetyl-coenzyme A carboxylase carboxyl transferase subunit beta (294 aa).

The region spanning 25-294 (VWTKCTSCEQ…PLVVPVDGSH (270 aa)) is the CoA carboxyltransferase N-terminal domain. Positions 29, 32, 48, and 51 each coordinate Zn(2+). Residues 29–51 (CTSCEQVLYSAELERNLEVCPKC) form a C4-type zinc finger.

It belongs to the AccD/PCCB family. Acetyl-CoA carboxylase is a heterohexamer composed of biotin carboxyl carrier protein (AccB), biotin carboxylase (AccC) and two subunits each of ACCase subunit alpha (AccA) and ACCase subunit beta (AccD). Zn(2+) is required as a cofactor.

It is found in the cytoplasm. The enzyme catalyses N(6)-carboxybiotinyl-L-lysyl-[protein] + acetyl-CoA = N(6)-biotinyl-L-lysyl-[protein] + malonyl-CoA. It participates in lipid metabolism; malonyl-CoA biosynthesis; malonyl-CoA from acetyl-CoA: step 1/1. Its function is as follows. Component of the acetyl coenzyme A carboxylase (ACC) complex. Biotin carboxylase (BC) catalyzes the carboxylation of biotin on its carrier protein (BCCP) and then the CO(2) group is transferred by the transcarboxylase to acetyl-CoA to form malonyl-CoA. In Aliivibrio fischeri (strain MJ11) (Vibrio fischeri), this protein is Acetyl-coenzyme A carboxylase carboxyl transferase subunit beta.